A 113-amino-acid chain; its full sequence is Large ribosomal subunit protein bL17 (113 aa).

The protein belongs to the bacterial ribosomal protein bL17 family. In terms of assembly, part of the 50S ribosomal subunit. Contacts protein L32.

The sequence is that of Large ribosomal subunit protein bL17 from Clostridium kluyveri (strain NBRC 12016).